We begin with the raw amino-acid sequence, 201 residues long: Peptidyl-tRNA hydrolase (201 aa).

Tyrosine 15 provides a ligand contact to tRNA. Histidine 20 (proton acceptor) is an active-site residue. The tRNA site is built by tyrosine 66, asparagine 68, and asparagine 114.

Belongs to the PTH family. As to quaternary structure, monomer.

It is found in the cytoplasm. It catalyses the reaction an N-acyl-L-alpha-aminoacyl-tRNA + H2O = an N-acyl-L-amino acid + a tRNA + H(+). Hydrolyzes ribosome-free peptidyl-tRNAs (with 1 or more amino acids incorporated), which drop off the ribosome during protein synthesis, or as a result of ribosome stalling. Functionally, catalyzes the release of premature peptidyl moieties from peptidyl-tRNA molecules trapped in stalled 50S ribosomal subunits, and thus maintains levels of free tRNAs and 50S ribosomes. The polypeptide is Peptidyl-tRNA hydrolase (Burkholderia mallei (strain ATCC 23344)).